A 331-amino-acid chain; its full sequence is PTS-dependent dihydroxyacetone kinase 2, dihydroxyacetone-binding subunit DhaK (331 aa).

In terms of domain architecture, DhaK spans 7–328 (DGYEAVEEML…LDTPCDTPYF (322 aa)). Dihydroxyacetone contacts are provided by residues 55–58 (GSGH) and D111. The active-site Proton acceptor is H58. Catalysis depends on H218, which acts as the Tele-hemiaminal-histidine intermediate.

As to quaternary structure, homodimer. The dihydroxyacetone kinase complex is composed of a homodimer of DhaM, a homodimer of DhaK and the subunit DhaL.

Its subcellular location is the cytoplasm. It carries out the reaction dihydroxyacetone + phosphoenolpyruvate = dihydroxyacetone phosphate + pyruvate. The protein operates within polyol metabolism; glycerol degradation. Dihydroxyacetone binding subunit of the dihydroxyacetone kinase, which is responsible for the phosphoenolpyruvate (PEP)-dependent phosphorylation of dihydroxyacetone via a phosphoryl group transfer from DhaL-ATP. The sequence is that of PTS-dependent dihydroxyacetone kinase 2, dihydroxyacetone-binding subunit DhaK from Listeria innocua serovar 6a (strain ATCC BAA-680 / CLIP 11262).